Consider the following 61-residue polypeptide: MTAWRAAGITYIQYSNIAARILRESLKTGLRADAAKRDASHVKFTPWANGKPAQRQTQSES.

Positions 3–15 are sufficient for mth activation; that stretch reads AWRAAGITYIQYS.

The protein belongs to the eukaryotic ATPase epsilon family.

In terms of biological role, activates the G-protein coupled receptor mth in vitro, leading to increased intracellular calcium ion levels. The chain is Protein stunted from Drosophila melanogaster (Fruit fly).